Here is a 388-residue protein sequence, read N- to C-terminus: Glucose-6-phosphate/phosphate translocator 2, chloroplastic (388 aa).

Residues 1-68 (MLSSIKPSSS…SASNFKREVK (68 aa)) constitute a chloroplast transit peptide. 8 helical membrane passes run 95 to 115 (LKIGIYFATWWALNVVFNIYN), 122 to 142 (FPYPWLTSTLSLACGSLMMLV), 158 to 178 (FWKTLFPVAVAHTIGHVAATV), 211 to 231 (FPLPVYLSLLPIIGGCALAAI), 233 to 253 (ELNFNITGFMGAMISNLAFVF), 281 to 301 (LVILTPFSIAVEGPQMWAAGW), 305 to 325 (VSQVGPNFVWWVVAQSVFYHL), and 358 to 378 (IIIFHTPIQPVNALGAAIAIF). An EamA domain is found at 113–231 (IYNKKVLNAF…IIGGCALAAI (119 aa)).

This sequence belongs to the TPT transporter family. GPT (TC 2.A.7.9) subfamily. As to expression, expressed in seeds, flowers, stamens, and rosette leaves, with highest levels found in sepals and senescing leaves.

It localises to the plastid. The protein resides in the chloroplast membrane. In terms of biological role, glucose 6-phosphate (Glc6P) transporter. Also transports inorganic phosphate, 3-phosphoglycerate, triose phosphates and, to a leser extent, phosphoenolpyruvate. Responsible for the transport of Glc6P into plastids of heterotrophic tissues where it can be used as a carbon source for starch biosynthesis, as substrate for fatty acid biosynthesis or as substrate for NADPH generation via the oxidative pentose phosphate pathway (OPPP). Required for dynamic acclimation of photosynthesis and partitioning of Glc6P between the chloroplast and the cytosol. May modulate the sensing of sugar status during early seedling development. The polypeptide is Glucose-6-phosphate/phosphate translocator 2, chloroplastic (Arabidopsis thaliana (Mouse-ear cress)).